Here is a 503-residue protein sequence, read N- to C-terminus: Activin receptor type-1-like (503 aa).

The first 21 residues, 1–21 (MTLGSPRKGLLMLLMALVTQG), serve as a signal peptide directing secretion. Topologically, residues 22 to 118 (DPVKPSRGPL…PSEQPGTDGQ (97 aa)) are extracellular. 3 disulfides stabilise this stretch: Cys34–Cys51, Cys36–Cys41, and Cys46–Cys69. The interval 73-76 (HREL) is mediates specificity for BMP ligand. 2 cysteine pairs are disulfide-bonded: Cys77–Cys89 and Cys90–Cys95. A glycan (N-linked (GlcNAc...) asparagine) is linked at Asn98. A helical membrane pass occupies residues 119–141 (LALILGPVLALLALVALGVLGLW). Residues 142–503 (HVRRRQEKQR…NSPEKPKVIQ (362 aa)) lie on the Cytoplasmic side of the membrane. 3 positions are modified to phosphoserine: Ser155, Ser160, and Ser161. The GS domain maps to 172–201 (SMLGDLLDSDCTTGSGSGLPFLVQRTVARQ). The region spanning 202–492 (VALVECVGKG…LRIKKTLQKI (291 aa)) is the Protein kinase domain. ATP contacts are provided by residues 208–216 (VGKGRYGEV) and Lys229. Asp330 serves as the catalytic Proton acceptor.

The protein belongs to the protein kinase superfamily. TKL Ser/Thr protein kinase family. TGFB receptor subfamily. In terms of assembly, interacts with TSC22D1/TSC-22. It depends on Mg(2+) as a cofactor. Mn(2+) is required as a cofactor.

It localises to the cell membrane. The catalysed reaction is L-threonyl-[receptor-protein] + ATP = O-phospho-L-threonyl-[receptor-protein] + ADP + H(+). It catalyses the reaction L-seryl-[receptor-protein] + ATP = O-phospho-L-seryl-[receptor-protein] + ADP + H(+). In terms of biological role, type I receptor for TGF-beta family ligands BMP9/GDF2 and BMP10 and important regulator of normal blood vessel development. On ligand binding, forms a receptor complex consisting of two type II and two type I transmembrane serine/threonine kinases. Type II receptors phosphorylate and activate type I receptors which autophosphorylate, then bind and activate SMAD transcriptional regulators. May bind activin as well. The sequence is that of Activin receptor type-1-like (ACVRL1) from Homo sapiens (Human).